An 816-amino-acid polypeptide reads, in one-letter code: Leucine--tRNA ligase (816 aa).

The short motif at 40–51 (PYPSGSGLHVGH) is the 'HIGH' region element. The 'KMSKS' region motif lies at 576–580 (KMSKS). Position 579 (Lys579) interacts with ATP.

The protein belongs to the class-I aminoacyl-tRNA synthetase family.

It localises to the cytoplasm. The catalysed reaction is tRNA(Leu) + L-leucine + ATP = L-leucyl-tRNA(Leu) + AMP + diphosphate. This Chlorobium phaeobacteroides (strain DSM 266 / SMG 266 / 2430) protein is Leucine--tRNA ligase.